Here is a 552-residue protein sequence, read N- to C-terminus: Lysine--tRNA ligase (552 aa).

Positions 72-80 (PSGLPHLGT) match the 'HIGH' region motif. The 'KMSKS' region signature appears at 320-324 (KISKS). Lys-323 contacts ATP.

This sequence belongs to the class-I aminoacyl-tRNA synthetase family.

It is found in the cytoplasm. It catalyses the reaction tRNA(Lys) + L-lysine + ATP = L-lysyl-tRNA(Lys) + AMP + diphosphate. This Caulobacter vibrioides (strain ATCC 19089 / CIP 103742 / CB 15) (Caulobacter crescentus) protein is Lysine--tRNA ligase.